Here is a 248-residue protein sequence, read N- to C-terminus: Aquaporin TIP2-3 (248 aa).

The next 2 helical transmembrane spans lie at 20–40 (AYVA…GSAI) and 54–74 (AGLV…VSMA). The NPA 1 motif lies at 83-85 (NPA). 3 helical membrane passes run 97 to 119 (TILT…CFLL), 141 to 161 (GVVM…ATAA), and 168 to 188 (LGTI…LAAG). The short motif at 196-198 (NPA) is the NPA 2 element. The helical transmembrane segment at 217-237 (WVGPLVGGGLAGLVYGDVFIA) threads the bilayer.

It belongs to the MIP/aquaporin (TC 1.A.8) family. TIP (TC 1.A.8.10) subfamily. Specifically expressed in roots.

The protein localises to the cell membrane. Its function is as follows. Water channel required to facilitate the transport of water across cell membrane. This chain is Aquaporin TIP2-3 (TIP2-3), found in Zea mays (Maize).